A 172-amino-acid polypeptide reads, in one-letter code: Oleosin 18 kDa (172 aa).

Ala-2 carries the N-acetylalanine modification. The segment at 2–38 (ADRDRAGQYYQQQRGQVGETVKGILPEKAPSASQALT) is polar. The segment at 39–110 (VATLFPLGGL…GGLSSLTFLA (72 aa)) is hydrophobic. Transmembrane regions (helical) follow at residues 42 to 62 (LFPLGGLLLVLSGLALAASVV), 70 to 90 (VFLIFSPVLVPAALLIGLAVA), and 91 to 111 (GFLTSGALGLGGLSSLTFLAN). Residues 147-172 (HAIQGRADQAGTGAGAGGGAGTKTSS) form a disordered region. Residues 158–172 (TGAGAGGGAGTKTSS) are compositionally biased toward gly residues.

Belongs to the oleosin family.

Its subcellular location is the lipid droplet. The protein resides in the membrane. Functionally, may have a structural role to stabilize the lipid body during desiccation of the seed by preventing coalescence of the oil. Probably interacts with both lipid and phospholipid moieties of lipid bodies. May also provide recognition signals for specific lipase anchorage in lipolysis during seedling growth. This chain is Oleosin 18 kDa (OLE18), found in Oryza sativa subsp. indica (Rice).